The following is a 358-amino-acid chain: Serine/threonine-protein phosphatase 2A activator 2 (358 aa).

In terms of assembly, interacts with the phosphatase PP2A catalytic subunits PPH21 and PPH22. Forms a ternary complex with PPH21-TAP42.

The protein resides in the cytoplasm. The enzyme catalyses [protein]-peptidylproline (omega=180) = [protein]-peptidylproline (omega=0). In terms of biological role, PPIases accelerate the folding of proteins. It catalyzes the cis-trans isomerization of proline imidic peptide bonds in oligopeptides. Acts as a regulatory subunit for TAP42-associated PP2A-like phosphatases modulating their activity or substrate specificity, probably by inducing a conformational change in the catalytic subunit, a direct target of the PPIase. Can reactivate inactive phosphatase PP2A-phosphatase methylesterase complexes (PP2Ai) in presence of ATP and Mg(2+) by dissociating the inactive form from the complex. Acts also inhibitory at high concentrations. Involved in the regulation of cell cycle progression, mitotic spindle formation and bud morphogenesis. In Saccharomyces cerevisiae (strain ATCC 204508 / S288c) (Baker's yeast), this protein is Serine/threonine-protein phosphatase 2A activator 2 (RRD2).